The chain runs to 393 residues: Succinate--CoA ligase [ADP-forming] subunit beta (393 aa).

Positions 9–245 constitute an ATP-grasp domain; it reads KMLFAQYGIP…PSQEDKCETY (237 aa). ATP is bound by residues Lys46, 53–55, Glu99, Ile102, and Glu107; that span reads GRG. Positions 200 and 214 each coordinate Mg(2+). Substrate contacts are provided by residues Asn265 and 322–324; that span reads GIV.

The protein belongs to the succinate/malate CoA ligase beta subunit family. As to quaternary structure, heterotetramer of two alpha and two beta subunits. Mg(2+) is required as a cofactor.

The enzyme catalyses succinate + ATP + CoA = succinyl-CoA + ADP + phosphate. It catalyses the reaction GTP + succinate + CoA = succinyl-CoA + GDP + phosphate. Its pathway is carbohydrate metabolism; tricarboxylic acid cycle; succinate from succinyl-CoA (ligase route): step 1/1. In terms of biological role, succinyl-CoA synthetase functions in the citric acid cycle (TCA), coupling the hydrolysis of succinyl-CoA to the synthesis of either ATP or GTP and thus represents the only step of substrate-level phosphorylation in the TCA. The beta subunit provides nucleotide specificity of the enzyme and binds the substrate succinate, while the binding sites for coenzyme A and phosphate are found in the alpha subunit. The chain is Succinate--CoA ligase [ADP-forming] subunit beta from Baumannia cicadellinicola subsp. Homalodisca coagulata.